A 209-amino-acid chain; its full sequence is Ribosomal RNA large subunit methyltransferase E (209 aa).

The S-adenosyl-L-methionine site is built by Gly-63, Trp-65, Asp-83, Asp-99, and Asp-124. Lys-164 functions as the Proton acceptor in the catalytic mechanism.

It belongs to the class I-like SAM-binding methyltransferase superfamily. RNA methyltransferase RlmE family.

Its subcellular location is the cytoplasm. It carries out the reaction uridine(2552) in 23S rRNA + S-adenosyl-L-methionine = 2'-O-methyluridine(2552) in 23S rRNA + S-adenosyl-L-homocysteine + H(+). Its function is as follows. Specifically methylates the uridine in position 2552 of 23S rRNA at the 2'-O position of the ribose in the fully assembled 50S ribosomal subunit. This Aliivibrio fischeri (strain MJ11) (Vibrio fischeri) protein is Ribosomal RNA large subunit methyltransferase E.